The chain runs to 145 residues: Small t antigen (145 aa).

The region spanning 6–82 is the J domain; sequence RLTELLCLPV…PEESGYATFE (77 aa). A disordered region spans residues 58-80; sequence EGLRADETLEDSDPEPEESGYAT. The span at 65–75 shows a compositional bias: acidic residues; that stretch reads TLEDSDPEPEE.

In terms of assembly, interacts with host PPP2R1A; the interaction inhibits PP2A activity.

The protein resides in the host cytoplasm. It is found in the host nucleus. Promotes efficient viral genome replication by accelerating both G1 and S phase progression of the cell cycle. The chain is Small t antigen from Budgerigar fledgling disease virus (BFPyV).